The primary structure comprises 213 residues: Adenylate kinase (213 aa).

10–15 contacts ATP; that stretch reads GAGKGT. Residues 30–59 are NMP; it reads STGDIFRANIKNNTELGQKAKTYMDKGELV. AMP is bound by residues Thr-31, Arg-36, 57-59, 85-88, and Gln-92; these read ELV and GFPR. An LID region spans residues 126-163; it reads GRRACVGCGATYHIQFNPTKVEGICDACGEKLILRDDD. Arg-127 is an ATP binding site. Positions 130 and 133 each coordinate Zn(2+). 136 to 137 provides a ligand contact to ATP; the sequence is TY. Zn(2+) contacts are provided by Cys-150 and Cys-153. AMP is bound by residues Arg-160 and Arg-171. Gln-199 serves as a coordination point for ATP.

The protein belongs to the adenylate kinase family. In terms of assembly, monomer.

It localises to the cytoplasm. The enzyme catalyses AMP + ATP = 2 ADP. It functions in the pathway purine metabolism; AMP biosynthesis via salvage pathway; AMP from ADP: step 1/1. Catalyzes the reversible transfer of the terminal phosphate group between ATP and AMP. Plays an important role in cellular energy homeostasis and in adenine nucleotide metabolism. In Lachnospira eligens (strain ATCC 27750 / DSM 3376 / VPI C15-48 / C15-B4) (Eubacterium eligens), this protein is Adenylate kinase.